The following is a 216-amino-acid chain: Probable transaldolase (216 aa).

Lys83 serves as the catalytic Schiff-base intermediate with substrate.

Belongs to the transaldolase family. Type 3B subfamily.

Its subcellular location is the cytoplasm. It catalyses the reaction D-sedoheptulose 7-phosphate + D-glyceraldehyde 3-phosphate = D-erythrose 4-phosphate + beta-D-fructose 6-phosphate. It functions in the pathway carbohydrate degradation; pentose phosphate pathway; D-glyceraldehyde 3-phosphate and beta-D-fructose 6-phosphate from D-ribose 5-phosphate and D-xylulose 5-phosphate (non-oxidative stage): step 2/3. Its function is as follows. Transaldolase is important for the balance of metabolites in the pentose-phosphate pathway. The chain is Probable transaldolase from Hyphomonas neptunium (strain ATCC 15444).